The sequence spans 162 residues: NADH-quinone oxidoreductase subunit I (162 aa).

4Fe-4S ferredoxin-type domains lie at 53 to 83 (LRRY…IEAE) and 93 to 122 (TRYD…EGPN). [4Fe-4S] cluster-binding residues include Cys-63, Cys-66, Cys-69, Cys-73, Cys-102, Cys-105, Cys-108, and Cys-112.

The protein belongs to the complex I 23 kDa subunit family. As to quaternary structure, NDH-1 is composed of 14 different subunits. Subunits NuoA, H, J, K, L, M, N constitute the membrane sector of the complex. The cofactor is [4Fe-4S] cluster.

Its subcellular location is the cell inner membrane. The catalysed reaction is a quinone + NADH + 5 H(+)(in) = a quinol + NAD(+) + 4 H(+)(out). NDH-1 shuttles electrons from NADH, via FMN and iron-sulfur (Fe-S) centers, to quinones in the respiratory chain. The immediate electron acceptor for the enzyme in this species is believed to be ubiquinone. Couples the redox reaction to proton translocation (for every two electrons transferred, four hydrogen ions are translocated across the cytoplasmic membrane), and thus conserves the redox energy in a proton gradient. The protein is NADH-quinone oxidoreductase subunit I of Sphingopyxis alaskensis (strain DSM 13593 / LMG 18877 / RB2256) (Sphingomonas alaskensis).